A 208-amino-acid chain; its full sequence is Photosystem I reaction center subunit II-1, chloroplastic (208 aa).

The N-terminal 45 residues, 1–45 (MATQAAGIFNSAITTAATSGVKKLHFFSTTHRPKSLSFTKTAIRA), are a transit peptide targeting the chloroplast. Phosphothreonine is present on T48. The disordered stretch occupies residues 49–72 (DSSAAAAAAPATKEAPVGFTPPQL). The segment covering 50-64 (SSAAAAAAPATKEAP) has biased composition (low complexity). The interval 141–149 (RLRSKYKIT) is ferredoxin and ferredoxin-oxidoreductase binding.

It belongs to the PsaD family. In terms of assembly, interacts with PGRL1A and PGRL1B. In terms of processing, phosphorylated by a threonine specific thylakoid kinase in a light activated and redox-dependent manner.

It localises to the plastid. It is found in the chloroplast thylakoid membrane. PsaD can form complexes with ferredoxin and ferredoxin-oxidoreductase in photosystem I (PS I) reaction center. PSAD may encode the ferredoxin-docking protein. This chain is Photosystem I reaction center subunit II-1, chloroplastic (psaD1), found in Arabidopsis thaliana (Mouse-ear cress).